We begin with the raw amino-acid sequence, 365 residues long: c-di-GMP synthase (365 aa).

The protein belongs to the CD-NTase family. E subfamily.

It carries out the reaction 2 GTP = 3',3'-c-di-GMP + 2 diphosphate. Functionally, cyclic nucleotide synthase (second messenger synthase) of a CBASS antivirus system. CBASS (cyclic oligonucleotide-based antiphage signaling system) provides immunity against bacteriophage. The CD-NTase protein synthesizes cyclic nucleotides in response to infection; these serve as specific second messenger signals. The signals activate a diverse range of effectors, leading to bacterial cell death and thus abortive phage infection. A type I-D(GG) CBASS system. Its function is as follows. Cyclic dinucleotide synthase that catalyzes the synthesis of c-di-GMP, has no activity with other NTP substrates. The polypeptide is c-di-GMP synthase (Flavobacteriaceae sp. genome_bin_11).